A 666-amino-acid chain; its full sequence is tRNA 5-methylaminomethyl-2-thiouridine biosynthesis bifunctional protein MnmC (666 aa).

Residues 1–245 form a tRNA (mnm(5)s(2)U34)-methyltransferase region; it reads MKQYAIQPAT…KREMLCGVME (245 aa). Positions 270–666 are FAD-dependent cmnm(5)s(2)U34 oxidoreductase; sequence IGGGIASALL…RKLLKGKAVK (397 aa).

This sequence in the N-terminal section; belongs to the methyltransferase superfamily. tRNA (mnm(5)s(2)U34)-methyltransferase family. In the C-terminal section; belongs to the DAO family. Requires FAD as cofactor.

It is found in the cytoplasm. It catalyses the reaction 5-aminomethyl-2-thiouridine(34) in tRNA + S-adenosyl-L-methionine = 5-methylaminomethyl-2-thiouridine(34) in tRNA + S-adenosyl-L-homocysteine + H(+). Functionally, catalyzes the last two steps in the biosynthesis of 5-methylaminomethyl-2-thiouridine (mnm(5)s(2)U) at the wobble position (U34) in tRNA. Catalyzes the FAD-dependent demodification of cmnm(5)s(2)U34 to nm(5)s(2)U34, followed by the transfer of a methyl group from S-adenosyl-L-methionine to nm(5)s(2)U34, to form mnm(5)s(2)U34. In Salmonella arizonae (strain ATCC BAA-731 / CDC346-86 / RSK2980), this protein is tRNA 5-methylaminomethyl-2-thiouridine biosynthesis bifunctional protein MnmC.